Here is a 302-residue protein sequence, read N- to C-terminus: L-threonate dehydrogenase (302 aa).

NAD(+)-binding positions include 7 to 35 (FHVG…TWGA) and Thr-102. Lys-178 is an active-site residue. Residue Lys-246 coordinates NAD(+).

This sequence belongs to the HIBADH-related family. L-threonate dehydrogenase subfamily.

The enzyme catalyses L-threonate + NAD(+) = 2-dehydro-L-erythronate + NADH + H(+). Its function is as follows. Catalyzes oxidation of L-threonate to 2-oxo-tetronate. Can use either NAD(+) or NADP(+) as cosubstrate, with a preference for NAD(+). The polypeptide is L-threonate dehydrogenase (Escherichia coli (strain K12)).